A 194-amino-acid chain; its full sequence is MRLCDTDIEHYLDQDLINISPRPTNDKISGATVDVRLGNSFRVFREHATPYIDLSGPREQVSAQLEKIMSDEIILAEGEAFFLHPGELALATTLESVKLPDNIVGWLDGRSSLARLGLMVHVTAHRIDPGWHGKIVLEFFNAGKLPLALRPNMAIGALSFEVLSGAAAKPYNAREDAKYKNQQSAISSRINEDK.

DCTP is bound by residues 110–115 (RSSLAR), Asp-128, 136–138 (VLE), Tyr-171, Lys-178, and Gln-182. Glu-138 (proton donor/acceptor) is an active-site residue.

The protein belongs to the dCTP deaminase family. As to quaternary structure, homotrimer.

The catalysed reaction is dCTP + H2O + H(+) = dUTP + NH4(+). It participates in pyrimidine metabolism; dUMP biosynthesis; dUMP from dCTP (dUTP route): step 1/2. Its function is as follows. Catalyzes the deamination of dCTP to dUTP. The chain is dCTP deaminase from Haemophilus ducreyi (strain 35000HP / ATCC 700724).